Here is a 409-residue protein sequence, read N- to C-terminus: Tryptophan synthase beta chain 1 (409 aa).

An N6-(pyridoxal phosphate)lysine modification is found at K104.

This sequence belongs to the TrpB family. In terms of assembly, tetramer of two alpha and two beta chains. The cofactor is pyridoxal 5'-phosphate.

The catalysed reaction is (1S,2R)-1-C-(indol-3-yl)glycerol 3-phosphate + L-serine = D-glyceraldehyde 3-phosphate + L-tryptophan + H2O. The protein operates within amino-acid biosynthesis; L-tryptophan biosynthesis; L-tryptophan from chorismate: step 5/5. In terms of biological role, the beta subunit is responsible for the synthesis of L-tryptophan from indole and L-serine. In Nostoc sp. (strain PCC 7120 / SAG 25.82 / UTEX 2576), this protein is Tryptophan synthase beta chain 1 (trpB1).